Consider the following 346-residue polypeptide: uncharacterized protein (346 aa).

This is an uncharacterized protein from Mycoplasma pneumoniae (strain ATCC 29342 / M129 / Subtype 1) (Mycoplasmoides pneumoniae).